A 160-amino-acid polypeptide reads, in one-letter code: Nucleotide-binding protein VF_1240 (160 aa).

The protein belongs to the YajQ family.

Functionally, nucleotide-binding protein. The sequence is that of Nucleotide-binding protein VF_1240 from Aliivibrio fischeri (strain ATCC 700601 / ES114) (Vibrio fischeri).